The primary structure comprises 293 residues: Outer membrane protein assembly factor BamD (293 aa).

The first 26 residues, 1–26 (MIQRPTFFSPIHLLAVLLATFILITG), serve as a signal peptide directing secretion. Residue cysteine 27 is the site of N-palmitoyl cysteine attachment. A lipid anchor (S-diacylglycerol cysteine) is attached at cysteine 27.

This sequence belongs to the BamD family. In terms of assembly, part of the Bam complex.

Its subcellular location is the cell outer membrane. Functionally, part of the outer membrane protein assembly complex, which is involved in assembly and insertion of beta-barrel proteins into the outer membrane. The chain is Outer membrane protein assembly factor BamD from Xylella fastidiosa (strain Temecula1 / ATCC 700964).